A 185-amino-acid chain; its full sequence is Alkyl hydroperoxide reductase AhpD (185 aa).

The active-site Proton donor is Cys132. Cys132 and Cys135 are oxidised to a cystine. The active-site Cysteine sulfenic acid (-SOH) intermediate is the Cys135.

This sequence belongs to the AhpD family.

The catalysed reaction is N(6)-[(R)-dihydrolipoyl]-L-lysyl-[lipoyl-carrier protein] + a hydroperoxide = N(6)-[(R)-lipoyl]-L-lysyl-[lipoyl-carrier protein] + an alcohol + H2O. Functionally, antioxidant protein with alkyl hydroperoxidase activity. Required for the reduction of the AhpC active site cysteine residues and for the regeneration of the AhpC enzyme activity. In Anaeromyxobacter sp. (strain Fw109-5), this protein is Alkyl hydroperoxide reductase AhpD.